Here is a 1254-residue protein sequence, read N- to C-terminus: Histone-lysine N-methyltransferase eggless (1254 aa).

2 disordered regions span residues 24-209 and 228-248; these read ALVE…EIPR and PVPR…SKTT. Composition is skewed to basic and acidic residues over residues 40-57 and 65-81; these read TPEK…KDLT and KSQE…KDPE. The segment covering 112-125 has biased composition (low complexity); sequence SVELLESPLKSPSS. Residues 136 to 162 show a composition bias toward basic and acidic residues; the sequence is LEEKEKPGPAKELEPKESEPDSKESSK. The segment covering 172–181 has biased composition (polar residues); sequence ELISSPTSDD. Composition is skewed to basic and acidic residues over residues 182 to 197 and 234 to 243; these read SLAK…EHGQ and AMQESKETQK. A coiled-coil region spans residues 391–416; sequence TILQAKIERLAKKFEEVDLQLAQVQG. Tudor domains are found at residues 535-607 and 634-691; these read RLPI…SEKV and QCTK…KETQ. Positions 734-760 are disordered; it reads ARKSTSKSGSPASTAAPPTGSSSSSAV. The segment covering 739–759 has biased composition (low complexity); sequence SKSGSPASTAAPPTGSSSSSA. The region spanning 811–877 is the MBD domain; that stretch reads LDSYSPLSKP…DNFDFTPDLR (67 aa). The 73-residue stretch at 939-1011 folds into the Pre-SET domain; that stretch reads VCCDCEDDCS…NCLNRVVQHS (73 aa). Residues Cys941, Cys943, Cys947, Cys953, Cys955, Cys993, Cys997, Cys999, and Cys1003 each coordinate Zn(2+). The 216-residue stretch at 1014-1229 folds into the SET domain; the sequence is MKLQVFKTSN…SGTELTWNYN (216 aa). Residues 1024-1026, Asp1062, and Tyr1064 contribute to the S-adenosyl-L-methionine site; that span reads RGW. Over residues 1081–1090 the composition is skewed to basic and acidic residues; the sequence is YESDVERADL. The segment at 1081-1139 is disordered; that stretch reads YESDVERADLDHEDDNYGPDAEDDDDFRPNNYYQKKKEKLRSSRSNSSSTQNTELDSQE. Residues 1091-1106 show a composition bias toward acidic residues; that stretch reads DHEDDNYGPDAEDDDD. Positions 1123 to 1134 are enriched in low complexity; sequence SRSNSSSTQNTE. Residues Arg1183 and 1186-1187 each bind S-adenosyl-L-methionine; that span reads NH. The Zn(2+) site is built by Cys1189, Cys1242, Cys1244, and Cys1249. A Post-SET domain is found at 1238-1254; it reads KVLYCQCGAQNCRVRLL.

It belongs to the class V-like SAM-binding methyltransferase superfamily. Histone-lysine methyltransferase family. Suvar3-9 subfamily.

The protein resides in the nucleus. It is found in the chromosome. The catalysed reaction is L-lysyl(9)-[histone H3] + 3 S-adenosyl-L-methionine = N(6),N(6),N(6)-trimethyl-L-lysyl(9)-[histone H3] + 3 S-adenosyl-L-homocysteine + 3 H(+). Its function is as follows. Histone methyltransferase that specifically trimethylates 'Lys-9' of histone H3 in ovary. H3 'Lys-9' trimethylation represents a specific tag for epigenetic transcriptional repression by recruiting Su(var)205/HP1 to methylated histones. Plays a central role during oogenesis. This is Histone-lysine N-methyltransferase eggless (egg) from Drosophila pseudoobscura pseudoobscura (Fruit fly).